A 303-amino-acid polypeptide reads, in one-letter code: Serine/threonine-protein phosphatase 6 catalytic subunit (303 aa).

Residues D51, H53, D79, and N111 each coordinate Mn(2+). H112 acts as the Proton donor in catalysis. The Mn(2+) site is built by H161 and H235.

This sequence belongs to the PPP phosphatase family. PP-6 (PP-V) subfamily. Requires Mn(2+) as cofactor.

The protein resides in the cytoplasm. The enzyme catalyses O-phospho-L-seryl-[protein] + H2O = L-seryl-[protein] + phosphate. The catalysed reaction is O-phospho-L-threonyl-[protein] + H2O = L-threonyl-[protein] + phosphate. Its function is as follows. May be involved in controlling cellularization or in regulating transcription of the genes involved in this process. The polypeptide is Serine/threonine-protein phosphatase 6 catalytic subunit (PpV) (Drosophila melanogaster (Fruit fly)).